Here is a 566-residue protein sequence, read N- to C-terminus: O-fucosyltransferase 36 (566 aa).

The segment covering 1–14 (MERNSSDDEEDHQH) has biased composition (basic and acidic residues). The segment at 1–37 (MERNSSDDEEDHQHLIPQNDTRIRHREDSVSSNATTI) is disordered. Residues 66–86 (YVIVFVSLIISIGLLFLLTDP) form a helical; Signal-anchor for type II membrane protein membrane-spanning segment. Residues N93, N129, N138, N179, and N190 are each glycosylated (N-linked (GlcNAc...) asparagine). Residues 415-417 (HFR) and 531-532 (TF) each bind substrate.

This sequence belongs to the glycosyltransferase GT106 family.

It localises to the membrane. Its pathway is glycan metabolism. The chain is O-fucosyltransferase 36 from Arabidopsis thaliana (Mouse-ear cress).